A 627-amino-acid polypeptide reads, in one-letter code: MEGLAGYVYKAASEGKVLTLAALLLNRSESDIRYLLGYVSQQGGQRSTPLIIAARNGHAKVVRLLLEHYRVQTQQTGTVRFDGYVIDGATALWCAAGAGHFEVVKLLVSHGANVNHTTVTNSTPLRAACFDGRLDIVKYLVENNANISIANKYDNTCLMIAAYKGHTDVVRYLLEQRADPNAKAHCGATALHFAAEAGHIDIVKELIKWRAAIVVNGHGMTPLKVAAESCKADVVELLLSHADCDRRSRIEALELLGASFANDRENYDIMKTYHYLYLAMLERFQDGDNILEKEVLPPIHAYGNRTECRNPQELEAIRQDRDALHMEGLIVRERILGADNIDVSHPIIYRGAVYADNMEFEQCIKLWLHALHLRQKGNRNTHKDLLRFAQVFSQMIHLNEAVKAPDIECVLRCSVLEIEQSMNRVKNISDADVHSAMDNYECNLYTFLYLVCISTKTQCSEEDQCRINKQIYNLIHLDPRTREGFTLLHLAVNSNTPVDDFHTNDVCSFPNALVTKLLLDCGAEVNAVDNEGNSALHIIVQYNRPISDFLTLHSIIISLVEAGAHTDMTNKQNKTPLDKSTTGVSEILLKTQMKMSLKCLAARAVRANDINYQDQIPRTLEEFVGFH.

4 ANK repeats span residues 45 to 74 (QRSTPLIIAARNGHAKVVRLLLEHYRVQTQ), 87 to 116 (DGATALWCAAGAGHFEVVKLLVSHGANVNH), 120 to 149 (TNSTPLRAACFDGRLDIVKYLVENNANISI), and 153 to 182 (YDNTCLMIAAYKGHTDVVRYLLEQRADPNA). The Zn(2+) site is built by His185, Cys186, and His218. ANK repeat units follow at residues 186 to 215 (CGATALHFAAEAGHIDIVKELIKWRAAIVV) and 218 to 248 (HGMTPLKVAAESCKADVVELLLSHADCDRRS). The TPR repeat unit spans residues 344–377 (SHPIIYRGAVYADNMEFEQCIKLWLHALHLRQKG). 2 ANK repeats span residues 483–527 (EGFT…EVNA) and 531–568 (EGNSALHIIVQYNRPISDFLTLHSIIISLVEAGAHTDM).

This sequence belongs to the fem-1 family. As to quaternary structure, component of a CRL2 E3 ubiquitin-protein ligase complex, also named ECS (Elongin BC-CUL2/5-SOCS-box protein) complex, composed of CUL2, Elongin BC (ELOB and ELOC), RBX1 and substrate-specific adapter FEM1B. Homooligomer. Interacts with PPM1F and PHTF1. Interacts with the death domain of FAS/TNFRSF6 and TNFRSF1A. Interacts with CHEK1. Interacts with NKX3-1. In terms of tissue distribution, present in adult testis (at protein level).

It is found in the cytoplasm. The protein localises to the nucleus. It functions in the pathway protein modification; protein ubiquitination. With respect to regulation, activity of the CRL2(FEM1B) complex toward FNIP1 is inhibited by BEX family proteins (BEX1, BEX2, BEX3 and/or BEX4) in absence of reductive stress. Mechanistically, BEX proteins act as pseudosubstrate inhibitors that associate with FEM1B via zinc in absence of reductive stress, thereby preventing association between FEM1B and FNIP1. Substrate-recognition component of a Cul2-RING (CRL2) E3 ubiquitin-protein ligase complex of the DesCEND (destruction via C-end degrons) pathway, which recognizes a C-degron located at the extreme C terminus of target proteins, leading to their ubiquitination and degradation. The C-degron recognized by the DesCEND pathway is usually a motif of less than ten residues and can be present in full-length proteins, truncated proteins or proteolytically cleaved forms. The CRL2(FEM1B) complex specifically recognizes proteins ending with -Gly-Leu-Asp-Arg, such as CDK5R1, leading to their ubiquitination and degradation. Also acts as a regulator of the reductive stress response by mediating ubiquitination of reduced FNIP1: in response to reductive stress, the CRL2(FEM1B) complex specifically recognizes a conserved Cys degron in FNIP1 when this degron is reduced, leading to FNIP1 degradation and subsequent activation of mitochondria to recalibrate reactive oxygen species (ROS). Mechanistically, recognizes and binds reduced FNIP1 through two interface zinc ions, which act as a molecular glue that recruit reduced FNIP1 to FEM1B. Promotes ubiquitination of GLI1, suppressing GLI1 transcriptional activator activity. Promotes ubiquitination and degradation of ANKRD37. Promotes ubiquitination and degradation of SLBP. Involved in apoptosis by acting as a death receptor-associated protein that mediates apoptosis. Also involved in glucose homeostasis in pancreatic islet. May also act as an adapter/mediator in replication stress-induced signaling that leads to the activation of CHEK1. This chain is Protein fem-1 homolog B, found in Rattus norvegicus (Rat).